The following is a 443-amino-acid chain: GTPase Der (443 aa).

EngA-type G domains are found at residues 3-167 and 176-349; these read PVIA…PEEK and IKIA…QSIQ. GTP-binding positions include 9–16, 56–60, 119–122, 182–189, 229–233, and 294–297; these read GRPNVGKS, DTGGL, NKAD, DTAGI, and NKWD. The KH-like domain maps to 350-434; it reads QELTTGQLTR…PVHIKLKTDP (85 aa).

This sequence belongs to the TRAFAC class TrmE-Era-EngA-EngB-Septin-like GTPase superfamily. EngA (Der) GTPase family. Associates with the 50S ribosomal subunit.

In terms of biological role, GTPase that plays an essential role in the late steps of ribosome biogenesis. This is GTPase Der from Coxiella burnetii (strain CbuK_Q154) (Coxiella burnetii (strain Q154)).